The primary structure comprises 313 residues: MDREKQQLSIEAARLYYQSDYSQQQIAEQLNISRPTVSRLLQYAKEKGYVQIRVMDPFEDLDALGSILEEKYGLLEAHVVFSPTPDYAGITHDLSRYGAEYMHETVKDGDIVGVSWGTTMYQIAQNMQPKQVKGVEVVQLKGGISHSRVNTYSAETIQLFAEAFQTMPRYLPLPVVFDNADVKRMVEKDRHIERIIEMGKQANIALFTVGTVRDEALLFRLGYFNEEEKALLKKQAVGDICSRFFDAKGNICSSAINDRTIGVELQDLRLKERSILVAGGSRKVSSIHGALTGKYANVLIIDQHTARALVNDL.

The segment at residues 23–42 (QQQIAEQLNISRPTVSRLLQ) is a DNA-binding region (H-T-H motif).

Belongs to the SorC transcriptional regulatory family. As to quaternary structure, homooctamer.

In terms of biological role, negative regulator of the dra-nupC-pdp operon. DeoR binds cooperatively to the operator DNA, which consists of a palindrome and a direct repeat sequence located 3' to the palindrome. The chain is Deoxyribonucleoside regulator from Bacillus subtilis (strain 168).